Here is a 432-residue protein sequence, read N- to C-terminus: Probable rhamnogalacturonase E (432 aa).

An N-terminal signal peptide occupies residues 1–21 (MQSKTFSVLSSCLLLIATVQG). C42 and C68 are disulfide-bonded. 3 N-linked (GlcNAc...) asparagine glycosylation sites follow: N53, N91, and N106. The active-site Proton donor is the D221. C223 and C240 are disulfide-bonded. Residues N241 and N256 are each glycosylated (N-linked (GlcNAc...) asparagine). Residue H296 is part of the active site. Intrachain disulfides connect C329–C335 and C357–C366.

Belongs to the glycosyl hydrolase 28 family.

The protein resides in the secreted. Its function is as follows. Pectinolytic enzymes consist of four classes of enzymes: pectine lyase, polygalacturonase, pectin methylesterase and rhamnogalacturonase. Hydrolyzes alpha-D-galacturonopyranosyl-(1,2)-alpha-L-rhamnopyranosyl linkages in the backbone of the hairy regions of pectins. This is Probable rhamnogalacturonase E (rhgE) from Aspergillus oryzae (strain ATCC 42149 / RIB 40) (Yellow koji mold).